An 814-amino-acid polypeptide reads, in one-letter code: Origin of replication complex subunit 1 (814 aa).

Residues 1–15 (MDLSATPSRSKSGLR) are compositionally biased toward polar residues. A disordered region spans residues 1-127 (MDLSATPSRS…PKKPKKRAYY (127 aa)). 2 stretches are compositionally biased toward low complexity: residues 51-62 (APMSPVTPSSVR) and 69-80 (ETPTKVTSETPV). The Nuclear localization signal signature appears at 105–112 (PKRQRQRQ). Positions 108–127 (QRQRQRQRQQPKKPKKRAYY) are enriched in basic residues. Residues 157 to 181 (DPEAEECRVCFRAGAAVMVECDVCL) are histone H3 binding. The PHD-type zinc finger occupies 160 to 209 (AEECRVCFRAGAAVMVECDVCLGGFHLRCVRPPLRRVPEGDWACPYCEAE). Zn(2+) is bound by residues Cys163, Cys166, Cys177, Cys180, His185, and Cys188. The interval 197–201 (PEGDW) is histone H3 binding. 2 residues coordinate Zn(2+): Cys203 and Cys206. In terms of domain architecture, BAH spans 218 to 335 (PKPPEGKRIV…IHWHNFKRLA (118 aa)). The interval 310-315 (ASDQGD) is histone H3 binding. 2 stretches are compositionally biased toward acidic residues: residues 339–349 (DEPETKEDPGD) and 360–373 (SDSD…EEEE). Positions 339-384 (DEPETKEDPGDEPYNAGNDYVSDSDEDSEYDEEEEPTKCSSARTHQ) are disordered. The interval 433-804 (PKSLPCRDKE…DDVTFALKES (372 aa)) is necessary and sufficient for ORC complex assembly. Residues 468–475 (GVPGTGKT) and 468–476 (GVPGTGKTM) each bind ATP. The Mg(2+) site is built by Asp558 and Glu559. Positions 559, 592, and 657 each coordinate ATP.

It belongs to the ORC1 family. Component of the origin recognition complex (ORC) composed of at least ORC1, ORC2, ORC3, ORC4, ORC5 and ORC6. ORC is regulated in a cell-cycle and development dependent manner. It is sequentially assembled at the exit from anaphase of mitosis and disassembled as cells enter S phase. Binds unmodified and methylated histone H3. As to expression, expressed strongly in root tips and shoot apical meristem (SAM), and weakly in young leaves. Not detected in mature leaves.

It localises to the nucleus. In terms of biological role, essential protein. Component of the origin recognition complex (ORC) that binds origins of replication. It has a role in both chromosomal replication and mating type transcriptional silencing. Binds to the ARS consensus sequence (ACS) of origins of replication. H3K4me3 effector that positively regulates the transcription of a subset of genes. Required for cell proliferation. The chain is Origin of replication complex subunit 1 from Oryza sativa subsp. japonica (Rice).